Reading from the N-terminus, the 371-residue chain is RT1 class I histocompatibility antigen, AA alpha chain (371 aa).

A signal peptide spans methionine 1–alanine 24. The interval glycine 25–glycine 114 is alpha-1. Over glycine 25 to threonine 311 the chain is Extracellular. Asparagine 110 is a glycosylation site (N-linked (GlcNAc...) asparagine). The alpha-2 stretch occupies residues glycine 115–serine 206. The alpha-3 stretch occupies residues aspartate 207–tryptophan 298. The Ig-like C1-type domain occupies proline 209–serine 295. Asparagine 280 carries N-linked (GlcNAc...) asparagine glycosylation. Residues glutamate 299–threonine 311 form a connecting peptide region. A helical transmembrane segment spans residues valine 312–valine 336. Residues arginine 337–alanine 371 are Cytoplasmic-facing. The tract at residues asparagine 342–alanine 371 is disordered. Phosphoserine occurs at positions 362 and 365.

This sequence belongs to the MHC class I family. In terms of assembly, heterodimer of an alpha chain and a beta chain (beta-2-microglobulin).

Its subcellular location is the membrane. Involved in the presentation of foreign antigens to the immune system. This Rattus norvegicus (Rat) protein is RT1 class I histocompatibility antigen, AA alpha chain.